Here is a 629-residue protein sequence, read N- to C-terminus: Aspartate--tRNA(Asp/Asn) ligase (629 aa).

The tract at residues 1-24 (MERSSRADLISEDSHPARTHTCGD) is disordered. Residues 12–24 (EDSHPARTHTCGD) show a composition bias toward basic and acidic residues. E194 lines the L-aspartate pocket. The tract at residues 218-221 (QTYK) is aspartate. An L-aspartate-binding site is contributed by R240. ATP is bound by residues 240 to 242 (RDE) and Q249. L-aspartate is bound at residue H474. Residue E508 participates in ATP binding. R515 contacts L-aspartate. Residue 560–563 (GLDR) participates in ATP binding.

Belongs to the class-II aminoacyl-tRNA synthetase family. Type 1 subfamily. In terms of assembly, homodimer.

Its subcellular location is the cytoplasm. It catalyses the reaction tRNA(Asx) + L-aspartate + ATP = L-aspartyl-tRNA(Asx) + AMP + diphosphate. Aspartyl-tRNA synthetase with relaxed tRNA specificity since it is able to aspartylate not only its cognate tRNA(Asp) but also tRNA(Asn). Reaction proceeds in two steps: L-aspartate is first activated by ATP to form Asp-AMP and then transferred to the acceptor end of tRNA(Asp/Asn). This chain is Aspartate--tRNA(Asp/Asn) ligase, found in Salinibacter ruber (strain DSM 13855 / M31).